The sequence spans 188 residues: Xanthine phosphoribosyltransferase (188 aa).

Xanthine is bound by residues leucine 20 and asparagine 27. 127–131 provides a ligand contact to 5-phospho-alpha-D-ribose 1-diphosphate; the sequence is ANGNA. Residue lysine 155 coordinates xanthine.

This sequence belongs to the purine/pyrimidine phosphoribosyltransferase family. Xpt subfamily. As to quaternary structure, homodimer.

Its subcellular location is the cytoplasm. The enzyme catalyses XMP + diphosphate = xanthine + 5-phospho-alpha-D-ribose 1-diphosphate. The protein operates within purine metabolism; XMP biosynthesis via salvage pathway; XMP from xanthine: step 1/1. In terms of biological role, converts the preformed base xanthine, a product of nucleic acid breakdown, to xanthosine 5'-monophosphate (XMP), so it can be reused for RNA or DNA synthesis. The chain is Xanthine phosphoribosyltransferase from Phocaeicola vulgatus (strain ATCC 8482 / DSM 1447 / JCM 5826 / CCUG 4940 / NBRC 14291 / NCTC 11154) (Bacteroides vulgatus).